Consider the following 109-residue polypeptide: Death-associated protein-like 1 homolog (109 aa).

Disordered regions lie at residues 1–51 (MVQL…KPRS) and 76–100 (FPET…ISRI). Positions 31–50 (KSADENANVEKETRKTDKPR) are enriched in basic and acidic residues.

Belongs to the DAP-DAPL1 family. As to quaternary structure, associates with ribosomes; preventing translation. Interacts with eiF5a (eif5a and eif5a2); preventing translation.

Functionally, ribosome-binding protein that promotes ribosome hibernation, a process during which ribosomes are stabilized in an inactive state and preserved from proteasomal degradation. Acts via its association with eiF5a (eif5a and eif5a2) at the polypeptide exit tunnel of the ribosome, preventing mRNA translation. Plays a key role in ribosome hibernation in the mature egg by preventing mRNA translation, leading to ribosome inactivation. Ribosomes, which are produced in large quantities during oogenesis, are stored and translationally repressed in the egg and early embryo. The polypeptide is Death-associated protein-like 1 homolog (Danio rerio (Zebrafish)).